We begin with the raw amino-acid sequence, 510 residues long: Internal alternative NAD(P)H-ubiquinone oxidoreductase A1, mitochondrial (510 aa).

Residues 1 to 48 (MLWIKNLARISQTTSSSVGNVFRNPESYTLSSRFCTALQKQQVTDTVQ) constitute a mitochondrion transit peptide. Residue 75–105 (RVLVLGSGWAGCRVLKGIDTSIYDVVCVSPR) coordinates FAD. An NAD(+)-binding site is contributed by 242–278 (LHCVVVGGGPTGVEFSGELSDFIMKDVRQRYSHVKDD). Residues 501–510 (FVFGRDISRI) carry the Microbody targeting signal motif.

The protein belongs to the NADH dehydrogenase family. FAD serves as cofactor. Expressed in seedlings, cotyledons, young leaves, stems and flowers and, to a lower extent, in roots and buds.

Its subcellular location is the mitochondrion inner membrane. It localises to the peroxisome. The enzyme catalyses a quinone + NADH + H(+) = a quinol + NAD(+). It carries out the reaction a ubiquinone + NADH + H(+) = a ubiquinol + NAD(+). Its function is as follows. Alternative NADH-ubiquinone oxidoreductase which catalyzes the oxidation of mitochondrial NADH does not translocate protons across the inner mitochondrial membrane. This Arabidopsis thaliana (Mouse-ear cress) protein is Internal alternative NAD(P)H-ubiquinone oxidoreductase A1, mitochondrial (NDA1).